Consider the following 862-residue polypeptide: Valine--tRNA ligase (862 aa).

Residues 43–53 (PNVTGSLHMGH) carry the 'HIGH' region motif. The Zn(2+) site is built by Cys176, Cys179, Cys344, Cys347, Cys417, Cys420, Cys438, and Cys441. Residues 528-532 (KMSKS) carry the 'KMSKS' region motif. Residue Lys531 participates in ATP binding. The stretch at 802–862 (RRRQEKRLKE…RIREALSQIG (61 aa)) forms a coiled coil.

Belongs to the class-I aminoacyl-tRNA synthetase family. ValS type 1 subfamily. In terms of assembly, monomer. The cofactor is Zn(2+).

The protein resides in the cytoplasm. The catalysed reaction is tRNA(Val) + L-valine + ATP = L-valyl-tRNA(Val) + AMP + diphosphate. Catalyzes the attachment of valine to tRNA(Val). As ValRS can inadvertently accommodate and process structurally similar amino acids such as threonine, to avoid such errors, it has a 'posttransfer' editing activity that hydrolyzes mischarged Thr-tRNA(Val) in a tRNA-dependent manner. This Thermus thermophilus (strain ATCC BAA-163 / DSM 7039 / HB27) protein is Valine--tRNA ligase.